The following is an 89-amino-acid chain: Small ribosomal subunit protein uS15 (89 aa).

It belongs to the universal ribosomal protein uS15 family. Part of the 30S ribosomal subunit. Forms a bridge to the 50S subunit in the 70S ribosome, contacting the 23S rRNA.

Its function is as follows. One of the primary rRNA binding proteins, it binds directly to 16S rRNA where it helps nucleate assembly of the platform of the 30S subunit by binding and bridging several RNA helices of the 16S rRNA. In terms of biological role, forms an intersubunit bridge (bridge B4) with the 23S rRNA of the 50S subunit in the ribosome. In Streptococcus uberis (strain ATCC BAA-854 / 0140J), this protein is Small ribosomal subunit protein uS15.